A 160-amino-acid chain; its full sequence is Phosphopantetheine adenylyltransferase (160 aa).

The protein belongs to the eukaryotic CoaD family.

It is found in the cytoplasm. The enzyme catalyses (R)-4'-phosphopantetheine + ATP + H(+) = 3'-dephospho-CoA + diphosphate. It functions in the pathway cofactor biosynthesis; coenzyme A biosynthesis. Its function is as follows. Reversibly transfers an adenylyl group from ATP to 4'-phosphopantetheine, yielding dephospho-CoA (dPCoA) and pyrophosphate. The chain is Phosphopantetheine adenylyltransferase from Pyrococcus furiosus (strain ATCC 43587 / DSM 3638 / JCM 8422 / Vc1).